A 261-amino-acid polypeptide reads, in one-letter code: Ribonuclease HII (261 aa).

Residues 72–260 enclose the RNase H type-2 domain; it reads AVICGIDEVG…IKSIVLEKLD (189 aa). The a divalent metal cation site is built by Asp-78, Glu-79, and Asp-170.

It belongs to the RNase HII family. Mn(2+) serves as cofactor. Requires Mg(2+) as cofactor.

The protein localises to the cytoplasm. The enzyme catalyses Endonucleolytic cleavage to 5'-phosphomonoester.. In terms of biological role, endonuclease that specifically degrades the RNA of RNA-DNA hybrids. The sequence is that of Ribonuclease HII from Staphylococcus carnosus (strain TM300).